The sequence spans 335 residues: Magnesium-protoporphyrin IX monomethyl ester [oxidative] cyclase (335 aa).

It belongs to the AcsF family. Requires Fe cation as cofactor.

It localises to the plastid. It is found in the chloroplast. It carries out the reaction Mg-protoporphyrin IX 13-monomethyl ester + 3 NADPH + 3 O2 + 2 H(+) = 3,8-divinyl protochlorophyllide a + 3 NADP(+) + 5 H2O. Its pathway is porphyrin-containing compound metabolism; chlorophyll biosynthesis (light-independent). Its function is as follows. Catalyzes the formation of the isocyclic ring in chlorophyll biosynthesis. Mediates the cyclase reaction, which results in the formation of divinylprotochlorophyllide (Pchlide) characteristic of all chlorophylls from magnesium-protoporphyrin IX 13-monomethyl ester (MgPMME). This is Magnesium-protoporphyrin IX monomethyl ester [oxidative] cyclase from Cyanidioschyzon merolae (strain NIES-3377 / 10D) (Unicellular red alga).